A 204-amino-acid chain; its full sequence is UPF0215 protein MTH_1316 (204 aa).

It belongs to the UPF0215 family.

This Methanothermobacter thermautotrophicus (strain ATCC 29096 / DSM 1053 / JCM 10044 / NBRC 100330 / Delta H) (Methanobacterium thermoautotrophicum) protein is UPF0215 protein MTH_1316.